The primary structure comprises 248 residues: Leucyl/phenylalanyl-tRNA--protein transferase (248 aa).

This sequence belongs to the L/F-transferase family.

It localises to the cytoplasm. It catalyses the reaction N-terminal L-lysyl-[protein] + L-leucyl-tRNA(Leu) = N-terminal L-leucyl-L-lysyl-[protein] + tRNA(Leu) + H(+). The enzyme catalyses N-terminal L-arginyl-[protein] + L-leucyl-tRNA(Leu) = N-terminal L-leucyl-L-arginyl-[protein] + tRNA(Leu) + H(+). The catalysed reaction is L-phenylalanyl-tRNA(Phe) + an N-terminal L-alpha-aminoacyl-[protein] = an N-terminal L-phenylalanyl-L-alpha-aminoacyl-[protein] + tRNA(Phe). Functions in the N-end rule pathway of protein degradation where it conjugates Leu, Phe and, less efficiently, Met from aminoacyl-tRNAs to the N-termini of proteins containing an N-terminal arginine or lysine. The sequence is that of Leucyl/phenylalanyl-tRNA--protein transferase from Oleidesulfovibrio alaskensis (strain ATCC BAA-1058 / DSM 17464 / G20) (Desulfovibrio alaskensis).